The sequence spans 362 residues: Cyclic di-GMP phosphodiesterase PdeL (362 aa).

Positions 18 to 83 (HLSLPGSVSE…TFWRDIFFQY (66 aa)) constitute an HTH luxR-type domain. Positions 42 to 61 (VTEISQYRNRSAKTISHQKK) form a DNA-binding region, H-T-H motif. Residues 106 to 360 (HIVTPEAISL…KFISEWVMKA (255 aa)) enclose the EAL domain. Substrate is bound at residue Gln-127. Glu-141 is a binding site for Mg(2+). Substrate contacts are provided by residues 144–145 (VR) and Asn-200. Positions 200, 232, and 262 each coordinate Mg(2+). Substrate contacts are provided by residues Asp-262, Lys-286, 319-322 (EGVE), and Tyr-341.

Is in a fast thermodynamic monomer-homodimer equilibrium. Dimerization is required for PDE activity. Dimerization affinity is increased about 100-fold upon substrate binding. Mg(2+) serves as cofactor. It depends on Mn(2+) as a cofactor.

The catalysed reaction is 3',3'-c-di-GMP + H2O = 5'-phosphoguanylyl(3'-&gt;5')guanosine + H(+). Its activity is regulated as follows. Strongly inhibited by Ca(2+). Acts both as an enzyme and as a c-di-GMP sensor to couple transcriptional activity to the c-di-GMP status of the cell. Phosphodiesterase (PDE) that catalyzes the hydrolysis of cyclic-di-GMP (c-di-GMP) to 5'-pGpG. Also acts as a transcription factor to control its own expression. This chain is Cyclic di-GMP phosphodiesterase PdeL, found in Escherichia coli (strain K12).